Consider the following 353-residue polypeptide: Mitochondrial import inner membrane translocase subunit TIM50 (353 aa).

Residues 1 to 21 (MAASAALFSRLRSGLRVGARG) constitute a mitochondrion transit peptide. Residues 22 to 65 (LCTRLAPPPPRTPEQVTEIANRGGSKAQGPQHQPGSEGPSYAKK) are Mitochondrial matrix-facing. The segment at 24–59 (TRLAPPPPRTPEQVTEIANRGGSKAQGPQHQPGSEG) is disordered. The helical transmembrane segment at 66-86 (IALWIAGLLGAGGTVSIVYIF) threads the bilayer. Residues 87–353 (GNNPVDENGT…SRLWPRSKQP (267 aa)) lie on the Mitochondrial intermembrane side of the membrane. Residues 143–286 (YYQPPYTLVL…LDLSAFLKTI (144 aa)) form the FCP1 homology domain. Serine 341 carries the post-translational modification Phosphoserine.

The protein belongs to the TIM50 family. As to quaternary structure, component of the TIM23 complex at least composed of TIMM23, TIMM17 (TIMM17A or TIMM17B) and TIMM50; within this complex, directly interacts with TIMM23. The complex interacts with the TIMM44 component of the PAM complex and with DNAJC15.

It localises to the mitochondrion inner membrane. In terms of biological role, essential component of the TIM23 complex, a complex that mediates the translocation of transit peptide-containing proteins across the mitochondrial inner membrane. Has some phosphatase activity in vitro; however such activity may not be relevant in vivo. The chain is Mitochondrial import inner membrane translocase subunit TIM50 (Timm50) from Mus musculus (Mouse).